A 500-amino-acid polypeptide reads, in one-letter code: Cytochrome P450 71B35 (500 aa).

A helical membrane pass occupies residues 1–21 (MAHIWLLPLIFLVCILLAVFN). Cys439 contacts heme.

This sequence belongs to the cytochrome P450 family. It depends on heme as a cofactor.

It localises to the membrane. This is Cytochrome P450 71B35 (CYP71B35) from Arabidopsis thaliana (Mouse-ear cress).